The sequence spans 255 residues: tRNA (guanine-N(1)-)-methyltransferase (255 aa).

S-adenosyl-L-methionine is bound by residues Gly-113 and 133 to 138 (IGDYVL).

Belongs to the RNA methyltransferase TrmD family. In terms of assembly, homodimer.

It localises to the cytoplasm. The catalysed reaction is guanosine(37) in tRNA + S-adenosyl-L-methionine = N(1)-methylguanosine(37) in tRNA + S-adenosyl-L-homocysteine + H(+). In terms of biological role, specifically methylates guanosine-37 in various tRNAs. This is tRNA (guanine-N(1)-)-methyltransferase from Mannheimia succiniciproducens (strain KCTC 0769BP / MBEL55E).